Here is a 103-residue protein sequence, read N- to C-terminus: NADH-quinone oxidoreductase subunit K 1 (103 aa).

Helical transmembrane passes span 6-26, 32-52, and 67-87; these read LGHF…GIFL, IIIL…LVAF, and LVLT…VVFF.

It belongs to the complex I subunit 4L family. As to quaternary structure, NDH-1 is composed of 14 different subunits. Subunits NuoA, H, J, K, L, M, N constitute the membrane sector of the complex.

It localises to the cell inner membrane. It carries out the reaction a quinone + NADH + 5 H(+)(in) = a quinol + NAD(+) + 4 H(+)(out). Functionally, NDH-1 shuttles electrons from NADH, via FMN and iron-sulfur (Fe-S) centers, to quinones in the respiratory chain. The immediate electron acceptor for the enzyme in this species is believed to be ubiquinone. Couples the redox reaction to proton translocation (for every two electrons transferred, four hydrogen ions are translocated across the cytoplasmic membrane), and thus conserves the redox energy in a proton gradient. This is NADH-quinone oxidoreductase subunit K 1 from Rhodopseudomonas palustris (strain ATCC BAA-98 / CGA009).